The following is a 348-amino-acid chain: Dihydroorotase (348 aa).

Zn(2+) is bound by residues H17 and H19. Substrate-binding positions include H19–R21 and N45. K103, H140, and H178 together coordinate Zn(2+). At K103 the chain carries N6-carboxylysine. Residue H140 coordinates substrate. L223 contacts substrate. Residue D251 coordinates Zn(2+). D251 is an active-site residue. The substrate site is built by H255 and A267.

The protein belongs to the metallo-dependent hydrolases superfamily. DHOase family. Class II DHOase subfamily. In terms of assembly, homodimer. Zn(2+) serves as cofactor.

It carries out the reaction (S)-dihydroorotate + H2O = N-carbamoyl-L-aspartate + H(+). Its pathway is pyrimidine metabolism; UMP biosynthesis via de novo pathway; (S)-dihydroorotate from bicarbonate: step 3/3. In terms of biological role, catalyzes the reversible cyclization of carbamoyl aspartate to dihydroorotate. In Escherichia coli O17:K52:H18 (strain UMN026 / ExPEC), this protein is Dihydroorotase.